Consider the following 324-residue polypeptide: Annexin A10 (324 aa).

4 Annexin repeats span residues 17-88, 89-160, 171-243, and 247-318; these read FNPI…GLMY, PPPL…NLVQ, AMAA…AIVL, and DKPA…AICA.

The protein belongs to the annexin family.

This chain is Annexin A10 (ANXA10), found in Homo sapiens (Human).